The chain runs to 466 residues: Phosphoenolpyruvate carboxykinase (ATP) (466 aa).

Residues arginine 61, tyrosine 196, and lysine 202 each contribute to the substrate site. ATP-binding positions include lysine 202, histidine 221, and 237-245 (GLSGTGKTT). Residues lysine 202 and histidine 221 each contribute to the Mn(2+) site. Aspartate 258 contributes to the Mn(2+) binding site. Positions 286, 323, and 448 each coordinate ATP. Arginine 323 provides a ligand contact to substrate.

It belongs to the phosphoenolpyruvate carboxykinase (ATP) family. Mn(2+) is required as a cofactor.

Its subcellular location is the cytoplasm. It carries out the reaction oxaloacetate + ATP = phosphoenolpyruvate + ADP + CO2. Its pathway is carbohydrate biosynthesis; gluconeogenesis. Its function is as follows. Involved in the gluconeogenesis. Catalyzes the conversion of oxaloacetate (OAA) to phosphoenolpyruvate (PEP) through direct phosphoryl transfer between the nucleoside triphosphate and OAA. The protein is Phosphoenolpyruvate carboxykinase (ATP) of Deinococcus radiodurans (strain ATCC 13939 / DSM 20539 / JCM 16871 / CCUG 27074 / LMG 4051 / NBRC 15346 / NCIMB 9279 / VKM B-1422 / R1).